The primary structure comprises 512 residues: Intermediate filament family orphan 2 (512 aa).

In terms of domain architecture, IF rod spans 50–479 (NIHLLKGLNV…RLIKGSADRN (430 aa)). The segment at 473-512 (KGSADRNSPSPSSVASSDSGSTDEIQEDLEREADVEPMVS) is disordered. Residues 480–492 (SPSPSSVASSDSG) show a composition bias toward low complexity. Residues 496–512 (EIQEDLEREADVEPMVS) show a composition bias toward acidic residues.

This sequence belongs to the intermediate filament family.

This is Intermediate filament family orphan 2 (Iffo2) from Mus musculus (Mouse).